Consider the following 473-residue polypeptide: Sphingosine kinase 1 (473 aa).

A DAGKc domain is found at Q83–N233. Residues N93–N95 and T125–N129 contribute to the ATP site. Residue S151 to G154 participates in substrate binding. D153 acts as the Proton donor/acceptor in catalysis. Residues E158 and G184 to G186 each bind ATP. D251 lines the substrate pocket. ATP is bound by residues R258, R265, and D448–E450.

The cofactor is Mg(2+). In terms of tissue distribution, expressed in the majority of cholinergic and GABAergic neurons, body wall muscle, excretory canal cells, intestine, and hypodermis.

It is found in the presynaptic cell membrane. Its subcellular location is the cell projection. The protein localises to the axon. The protein resides in the perikaryon. It localises to the mitochondrion membrane. It carries out the reaction a sphingoid base + ATP = a sphingoid 1-phosphate + ADP + H(+). It catalyses the reaction 15-methylhexadecasphing-4-enine + ATP = 15-methylhexadecasphing-4-enine 1-phosphate + ADP + H(+). The enzyme catalyses 15-methylhexadecasphinganine + ATP = 15-methylhexadecasphinganine 1-phosphate + ADP + H(+). It participates in lipid metabolism; sphingolipid metabolism. Functionally, catalyzes the phosphorylation of sphingoid bases to form sphingoid 1-phosphate (SPP), which have both intra- and extracellular functions. C.elegans contain specific sphingoid bases, which are unique or different in structure compared to the sphingoid bases found in other animals. Two examples of these distinctive compounds are: 15-methylhexadecasphinganine and 15-methylhexadecasphing-4-enine. Required for neurotransmitter release from neuromuscular junctions. Acts by recruiting the synaptic vesicle priming protein unc-13 to synapses. The polypeptide is Sphingosine kinase 1 (sphk-1) (Caenorhabditis elegans).